Consider the following 118-residue polypeptide: Large ribosomal subunit protein bL19 (118 aa).

This sequence belongs to the bacterial ribosomal protein bL19 family.

Functionally, this protein is located at the 30S-50S ribosomal subunit interface and may play a role in the structure and function of the aminoacyl-tRNA binding site. In Beutenbergia cavernae (strain ATCC BAA-8 / DSM 12333 / CCUG 43141 / JCM 11478 / NBRC 16432 / NCIMB 13614 / HKI 0122), this protein is Large ribosomal subunit protein bL19.